The primary structure comprises 64 residues: Small ribosomal subunit protein bS21 (64 aa).

The disordered stretch occupies residues 40–64; it reads PPSVKRKIKSQEAQRRMRRTKRKRF. Residues 55-64 are compositionally biased toward basic residues; that stretch reads RMRRTKRKRF.

It belongs to the bacterial ribosomal protein bS21 family.

This chain is Small ribosomal subunit protein bS21, found in Elusimicrobium minutum (strain Pei191).